Consider the following 90-residue polypeptide: Accessory gland-specific peptide 26Ab (90 aa).

An N-terminal signal peptide occupies residues 1 to 21; it reads MNYFAVICIFSCICLWQFSDA.

Main cells and secondary cells of the accessory glands of 1 day old virgin males (at protein level). In 5 day old virgin males, only detected in the secondary cells (at protein level). Reappears in the main cells after mating (at protein level). First detected in adult males 3-4 hr after eclosion, levels increase reaching a peak at day 3-5 which is maintained until at least day 10 of adulthood (at protein level). In unmated male adults, levels are maintained for the first 6 days of adulthood and then gradually decrease for at least the next 8 days. No expression in females.

It is found in the secreted. The protein localises to the extracellular space. It localises to the cytoplasm. In terms of biological role, this protein is transferred from male to female during mating and may affect egglaying and behavior after mating. This Drosophila melanogaster (Fruit fly) protein is Accessory gland-specific peptide 26Ab.